Reading from the N-terminus, the 393-residue chain is Ribonucleoside-diphosphate reductase subunit M2 (393 aa).

Ser-18 carries the post-translational modification Phosphoserine. The Fe cation site is built by Asp-142, Glu-173, and His-176. Tyr-180 is an active-site residue. Positions 236, 270, and 273 each coordinate Fe cation.

Belongs to the ribonucleoside diphosphate reductase small chain family. As to quaternary structure, heterodimer of a large and a small subunit. Fe cation serves as cofactor.

The protein resides in the cytoplasm. It carries out the reaction a 2'-deoxyribonucleoside 5'-diphosphate + [thioredoxin]-disulfide + H2O = a ribonucleoside 5'-diphosphate + [thioredoxin]-dithiol. Its function is as follows. Provides the precursors necessary for DNA synthesis. Catalyzes the biosynthesis of deoxyribonucleotides from the corresponding ribonucleotides. This Drosophila melanogaster (Fruit fly) protein is Ribonucleoside-diphosphate reductase subunit M2 (RnrS).